Reading from the N-terminus, the 594-residue chain is Frizzled and smoothened-like protein A (594 aa).

Positions 1–22 (MVDIRKSLFFIIFFIFYNYVNS) are cleaved as a signal peptide. The Extracellular portion of the chain corresponds to 23 to 248 (QKAINSDAFC…NEWYQFKDLT (226 aa)). An FZ domain is found at 27–173 (NSDAFCQKKT…SNYDLQCLNI (147 aa)). Intrachain disulfides connect Cys32–Cys98 and Cys41–Cys91. 2 N-linked (GlcNAc...) asparagine glycosylation sites follow: Asn55 and Asn106. The cysteines at positions 117 and 170 are disulfide-linked. Asn182, Asn189, Asn195, and Asn206 each carry an N-linked (GlcNAc...) asparagine glycan. Residues 249–269 (TVTGVISFVCIFFNIFIYGFL) traverse the membrane as a helical segment. At 270–277 (NKKHDRHT) the chain is on the cytoplasmic side. The chain crosses the membrane as a helical span at residues 278 to 298 (IGILCLSFSLWCCMLSDLIVA). The Extracellular portion of the chain corresponds to 299–329 (SSPDYSLVCPEPGRFARIHDSRCVANGIIFQ). Residues 330–350 (WGAVCTTMFWSAMAIDLYLVI) form a helical membrane-spanning segment. At 351–361 (KKLSLPAFTVK) the chain is on the cytoplasmic side. The chain crosses the membrane as a helical span at residues 362–382 (YFVAAIFTLALLFTTVPLAWD). Over 383–403 (DYGYGFGGVGCWIMSNSVQNG) the chain is Extracellular. Residues 404-424 (CFWIPMLICLLIGAVSICLII) traverse the membrane as a helical segment. The Cytoplasmic segment spans residues 425–448 (YEIVKVFKNVGRSGISIILANARL). Residues 449–469 (FGIVSFIFIEYIYLFVYHFWV) traverse the membrane as a helical segment. At 470-507 (QENTEKFTQNITDWVICVQTTGSSDGCPLPKAVPYATQ) the chain is on the extracellular side. N-linked (GlcNAc...) asparagine glycosylation is present at Asn479. A helical membrane pass occupies residues 508–528 (FIFLFFLRLLGIEVCIFYGIN). The Cytoplasmic segment spans residues 529 to 594 (SRSKNIILES…SKNGGDDDDL (66 aa)).

The protein belongs to the G-protein coupled receptor Fz/Smo family.

Its subcellular location is the membrane. This chain is Frizzled and smoothened-like protein A (fslA), found in Dictyostelium discoideum (Social amoeba).